Here is a 35-residue protein sequence, read N- to C-terminus: Putative neurotoxin (35 aa).

The LCN-type CS-alpha/beta domain occupies Lys1–Tyr35.

In terms of tissue distribution, expressed by the venom gland.

The protein resides in the secreted. Functionally, causes paralysis and death in insects (A.domestica). This chain is Putative neurotoxin, found in Rhopalurus junceus (Caribbean blue scorpion).